Consider the following 613-residue polypeptide: Phosphoinositide phospholipase C 6 (613 aa).

The region spanning 137-281 (QDMTAPLSHY…LLHRIIISTK (145 aa)) is the PI-PLC X-box domain. Residues H152 and H198 contribute to the active site. Residues 288-349 (ESRNPIVKQK…ASEDQKPAYK (62 aa)) form a disordered region. The PI-PLC Y-box domain maps to 349–465 (KRLITIHAGK…GYVKKPNFLM (117 aa)). The C2 domain maps to 466-595 (KKGFHDEVFD…PGIRSVPLYD (130 aa)).

Ca(2+) serves as cofactor. In terms of tissue distribution, expressed in leaves, flowers and siliques, but not in roots.

The protein resides in the cell membrane. It catalyses the reaction a 1,2-diacyl-sn-glycero-3-phospho-(1D-myo-inositol-4,5-bisphosphate) + H2O = 1D-myo-inositol 1,4,5-trisphosphate + a 1,2-diacyl-sn-glycerol + H(+). Functionally, the production of the second messenger molecules diacylglycerol (DAG) and inositol 1,4,5-trisphosphate (IP3) is mediated by activated phosphatidylinositol-specific phospholipase C enzymes. The chain is Phosphoinositide phospholipase C 6 (PLC6) from Arabidopsis thaliana (Mouse-ear cress).